A 274-amino-acid polypeptide reads, in one-letter code: MRKVAIYGKGGIGKSTTTQNTVAGLAEMGKKVMVVGCDPKADSTRLLLGGLQQKTVLDTLREEGEEVELEDIIKEGYRNTRCTESGGPEPGVGCAGRGIITSVNLLEQLGAYDEEWDLDYVFYDVLGDVVCGGFAMPIRDGKAEEIYIVCSGEMMAMYAANNICKGILKYADAGGVRLGGLICNSRKVDNEREMIEELAKKIGTQMIHFVPRDNFVQRAEINRKTVIDYDPTHGQADEYRALARKIDENEMFVIPKPLEIEELESLLIEFGIAN.

Gly8–Ser15 contributes to the ATP binding site. Cys94 lines the [4Fe-4S] cluster pocket. Arg97 is modified (ADP-ribosylarginine; by dinitrogenase reductase ADP-ribosyltransferase). Cys131 is a [4Fe-4S] cluster binding site.

This sequence belongs to the NifH/BchL/ChlL family. As to quaternary structure, homodimer. [4Fe-4S] cluster serves as cofactor. The reversible ADP-ribosylation of Arg-97 inactivates the nitrogenase reductase and regulates nitrogenase activity.

The enzyme catalyses N2 + 8 reduced [2Fe-2S]-[ferredoxin] + 16 ATP + 16 H2O = H2 + 8 oxidized [2Fe-2S]-[ferredoxin] + 2 NH4(+) + 16 ADP + 16 phosphate + 6 H(+). The key enzymatic reactions in nitrogen fixation are catalyzed by the nitrogenase complex, which has 2 components: the iron protein and the molybdenum-iron protein. In Chlorobium limicola (strain DSM 245 / NBRC 103803 / 6330), this protein is Nitrogenase iron protein.